The sequence spans 279 residues: Lysozyme-like protein 2 (279 aa).

The signal sequence occupies residues 1–19; the sequence is MIKLLVSFTILFVLSSARP. Residues 47–265 enclose the Ch-type lysozyme domain; that stretch reads MGNAVDFSFP…AAAPKTEVNM (219 aa).

This sequence belongs to the glycosyl hydrolase 25 family. In terms of tissue distribution, expressed in intestine.

Involved in resistance to Gram-positive bacteria P.aeruginosa or B.thuringiensis infection. In Caenorhabditis elegans, this protein is Lysozyme-like protein 2.